Consider the following 307-residue polypeptide: Solute carrier family 25 member 53 (307 aa).

Residues 1–23 are disordered; sequence MGEQNHSPGKELQHRTRAEAPGK. The span at 8–22 shows a compositional bias: basic and acidic residues; it reads PGKELQHRTRAEAPG. 3 Solcar repeats span residues 25-105, 112-202, and 210-302; these read SWHS…LLCF, HTLG…IQDG, and HWVP…HSRK. 6 helical membrane-spanning segments follow: residues 31-51, 82-102, 112-132, 181-201, 215-235, and 269-290; these read YALG…IYKV, YPPL…YDSL, HTLG…AVAL, VLAR…PIQD, LVSG…LIVL, and IYRG…TTAI.

The protein belongs to the mitochondrial carrier (TC 2.A.29) family.

The protein localises to the mitochondrion inner membrane. The polypeptide is Solute carrier family 25 member 53 (SLC25A53) (Homo sapiens (Human)).